The following is a 163-amino-acid chain: Cyanate hydratase (163 aa).

Catalysis depends on residues Arg-103, Glu-106, and Ser-129.

Belongs to the cyanase family.

The catalysed reaction is cyanate + hydrogencarbonate + 3 H(+) = NH4(+) + 2 CO2. In terms of biological role, catalyzes the reaction of cyanate with bicarbonate to produce ammonia and carbon dioxide. The chain is Cyanate hydratase from Paracoccidioides brasiliensis (strain Pb18).